The following is an 882-amino-acid chain: Translation initiation factor IF-2 (882 aa).

Disordered regions lie at residues 67–202 (KTVS…EKAR) and 223–278 (ERYG…KHMK). Basic and acidic residues-rich tracts occupy residues 95 to 152 (VKRD…EAKA) and 161 to 202 (EQPK…EKAR). A compositionally biased stretch (basic residues) spans 251 to 264 (GRRNRNKTQTKSKR). A compositionally biased stretch (basic and acidic residues) spans 265–274 (GGKDAREGRE). One can recognise a tr-type G domain in the interval 382–551 (PRAPVVTIMG…LLQAEVLELK (170 aa)). Residues 391-398 (GHVDHGKT) form a G1 region. Position 391–398 (391–398 (GHVDHGKT)) interacts with GTP. Positions 416–420 (GITQH) are G2. Positions 437–440 (DTPG) are G3. Residues 437 to 441 (DTPGH) and 491 to 494 (NKMD) contribute to the GTP site. The interval 491-494 (NKMD) is G4. The interval 527–529 (SAK) is G5.

The protein belongs to the TRAFAC class translation factor GTPase superfamily. Classic translation factor GTPase family. IF-2 subfamily.

The protein resides in the cytoplasm. Its function is as follows. One of the essential components for the initiation of protein synthesis. Protects formylmethionyl-tRNA from spontaneous hydrolysis and promotes its binding to the 30S ribosomal subunits. Also involved in the hydrolysis of GTP during the formation of the 70S ribosomal complex. The sequence is that of Translation initiation factor IF-2 from Shewanella amazonensis (strain ATCC BAA-1098 / SB2B).